The following is a 216-amino-acid chain: Octanoyltransferase (216 aa).

Residues Asp29–Pro209 enclose the BPL/LPL catalytic domain. Residues Arg68 to His75, Ala140 to Gly142, and Gly153 to Ala155 contribute to the substrate site. The active-site Acyl-thioester intermediate is the Cys171.

It belongs to the LipB family.

The protein localises to the cytoplasm. It carries out the reaction octanoyl-[ACP] + L-lysyl-[protein] = N(6)-octanoyl-L-lysyl-[protein] + holo-[ACP] + H(+). It functions in the pathway protein modification; protein lipoylation via endogenous pathway; protein N(6)-(lipoyl)lysine from octanoyl-[acyl-carrier-protein]: step 1/2. Its function is as follows. Catalyzes the transfer of endogenously produced octanoic acid from octanoyl-acyl-carrier-protein onto the lipoyl domains of lipoate-dependent enzymes. Lipoyl-ACP can also act as a substrate although octanoyl-ACP is likely to be the physiological substrate. In Rhodospirillum rubrum (strain ATCC 11170 / ATH 1.1.1 / DSM 467 / LMG 4362 / NCIMB 8255 / S1), this protein is Octanoyltransferase.